The sequence spans 269 residues: UPF0329 protein ECU04_1660 (269 aa).

Basic and acidic residues predominate over residues 1 to 12; that stretch reads MEERERGKEKGS. Positions 1–74 are disordered; the sequence is MEERERGKEK…SPKEKSKGEE (74 aa). Positions 13 to 23 are enriched in basic residues; the sequence is KGKGRKKRGKK. Basic and acidic residues predominate over residues 24–36; sequence GAGEAKEESKEED. Residues 37 to 51 show a composition bias toward acidic residues; the sequence is RGEEEEESVEADVPV.

This sequence belongs to the UPF0329 family.

The sequence is that of UPF0329 protein ECU04_1660 from Encephalitozoon cuniculi (strain GB-M1) (Microsporidian parasite).